The chain runs to 667 residues: Cysteine-rich receptor-like protein kinase 11 (667 aa).

Positions 1-24 are cleaved as a signal peptide; that stretch reads MKQRSLFSVLCFFFISFGVASVSA. 2 consecutive Gnk2-homologous domains span residues 25–129 and 135–248; these read QTCT…NTSF and LNPR…LYTY. At 25–292 the chain is on the extracellular side; sequence QTCTTDKGTF…SKGISAGVVV (268 aa). N-linked (GlcNAc...) asparagine glycosylation is found at asparagine 37, asparagine 54, asparagine 64, asparagine 106, asparagine 126, asparagine 150, and asparagine 254. The segment covering 259–268 has biased composition (pro residues); sequence SPPPEPPVTV. Positions 259–282 are disordered; it reads SPPPEPPVTVPQPAGDQDNPTNND. Asparagine 281 carries an N-linked (GlcNAc...) asparagine glycan. A helical transmembrane segment spans residues 293–313; that stretch reads AITVPTVIAILILLVLGFVLF. At 314-667 the chain is on the cytoplasmic side; sequence RRRKSYQRTK…YTSKSSSFSS (354 aa). A Protein kinase domain is found at 350–629; the sequence is FSTSNKLGEG…IILMLTSNTI (280 aa). ATP is bound by residues 356 to 364 and lysine 378; that span reads LGEGGFGAV. Tyrosine 423 is modified (phosphotyrosine). Aspartate 475 serves as the catalytic Proton acceptor. At serine 479 the chain carries Phosphoserine. Phosphothreonine is present on threonine 515. Tyrosine 523 is subject to Phosphotyrosine.

Belongs to the protein kinase superfamily. Ser/Thr protein kinase family. CRK subfamily. In terms of tissue distribution, detected in root, stem, leaf and flower.

Its subcellular location is the membrane. The catalysed reaction is L-seryl-[protein] + ATP = O-phospho-L-seryl-[protein] + ADP + H(+). It catalyses the reaction L-threonyl-[protein] + ATP = O-phospho-L-threonyl-[protein] + ADP + H(+). In Arabidopsis thaliana (Mouse-ear cress), this protein is Cysteine-rich receptor-like protein kinase 11 (CRK11).